The following is a 278-amino-acid chain: Secreted RxLR effector protein 151 (278 aa).

The N-terminal stretch at 1 to 18 (MRNRAVLFGLFFIGYSSC) is a signal peptide. The RxLR-dEER motif lies at 49-64 (RLLQVDGPKRILAEER).

The protein belongs to the RxLR effector family.

It localises to the secreted. The protein resides in the host endoplasmic reticulum membrane. Its function is as follows. Secreted effector that completely suppresses the host cell death induced by cell death-inducing proteins. The protein is Secreted RxLR effector protein 151 of Plasmopara viticola (Downy mildew of grapevine).